The chain runs to 270 residues: Glutamate racemase (270 aa).

Substrate is bound by residues 7–8 (DS) and 39–40 (YG). Residue Cys-70 is the Proton donor/acceptor of the active site. 71 to 72 (NT) contributes to the substrate binding site. Cys-194 acts as the Proton donor/acceptor in catalysis. 195 to 196 (TH) contacts substrate.

Belongs to the aspartate/glutamate racemases family.

It catalyses the reaction L-glutamate = D-glutamate. Its pathway is cell wall biogenesis; peptidoglycan biosynthesis. Functionally, provides the (R)-glutamate required for cell wall biosynthesis. This chain is Glutamate racemase, found in Jannaschia sp. (strain CCS1).